The sequence spans 102 residues: Small ribosomal subunit protein uS14 (102 aa).

It belongs to the universal ribosomal protein uS14 family. Part of the 30S ribosomal subunit. Contacts proteins S3 and S10.

Its function is as follows. Binds 16S rRNA, required for the assembly of 30S particles and may also be responsible for determining the conformation of the 16S rRNA at the A site. This Wolbachia pipientis subsp. Culex pipiens (strain wPip) protein is Small ribosomal subunit protein uS14.